Here is a 631-residue protein sequence, read N- to C-terminus: MPGIPLVSRETSSCSRSTEQMCHEDSRLRISEEEEIAAEESLAAYCKPVELYNIIQRRAIRNPLFLQRCLHYKIEAKHKRRIQMTVFLSGAIDAGVQTQKLFPLYILLARLVSPKPVAEYSAVYRFSRACILTGGLGVDGVSQAQANFLLPDMNRLALEAKSGSLAILFISFAGAQNSQFGIDSGKIHSGNIGGHCLWSKIPLQSLYASWQKSPNMDLGQRVDTVSLVEMQPCFIKLKSMSEEKCVSIQVPSNPLTSSSPQQVQVTISAEEVGSTEKSPYSSFSYNDISSSSLLQIIRLRTGNVVFNYRYYNNKLQKTEVTEDFSCPFCLVKCASFKGLRYHLPSTHDLLNFEFWVTEEFQAVNVSLKTETMISKVNEDDVDPKQQTFFFSSKKFRRRRQKSQVRSSRQGPHLGLGCEVLDKTDDAHSVRSEKSRIPPGKHYERIGGAESGQRVPPGTSPADVQSCGDPDYVQSIAGSTMLQFAKTRKISIERSDLRNRSLLQKRQFFHSHRAQPMALEQVLSDRDSEDEVDDDVADFEDRRMLDDFVDVTKDEKQMMHMWNSFVRKQRVLADGHIPWACEAFSRLHGPIMVRTPHLIWCWRVFMVKLWNHGLLDARTMNNCNTFLEQLQI.

The segment at 324–347 adopts a C2H2-type zinc-finger fold; sequence FSCPFCLVKCASFKGLRYHLPSTH. The span at 424 to 446 shows a compositional bias: basic and acidic residues; sequence DDAHSVRSEKSRIPPGKHYERIG. The segment at 424 to 465 is disordered; the sequence is DDAHSVRSEKSRIPPGKHYERIGGAESGQRVPPGTSPADVQS. The VEFS-box stretch occupies residues 505–583; sequence RQFFHSHRAQ…GHIPWACEAF (79 aa).

The protein belongs to the VEFS (VRN2-EMF2-FIS2-SU(Z)12) family. In plants, PcG complexes are probably composed of a member of the EZ family (CLF or MEA), FIE, and a member of the VEFS family (FIS2, VRN2 or EMF2). Binds to ALP1. As to expression, widely expressed throughout the life cycle with higher levels in proliferating tissues. Expressed in both vegetative and the reproductive shoot meristems.

The protein localises to the nucleus. Functionally, polycomb group (PcG) protein. Involved in flowering processes by repressing unknown target genes and preventing reproductive development. Participates in polycomb group (PcG) protein complex-mediated (probably in complex with EMF1) silencing of the flower homeotic genes AGAMOUS (AG), PISTILLATA (PI), and APETALA3 (AP3), as well as of some regulatory genes such as ABSCISIC ACID INSENSITIVE3 (ABI3), LONG VEGETATIVE PHASE1 (LOV1), and FLOWERING LOCUS C (FLC) during vegetative development, by mediating trimethylation of histone 3 lysine 27 on the AG chromatin (H3K27me3). PcG proteins act by forming multiprotein complexes, which are required to maintain the transcriptionally repressive state of homeotic genes throughout development. PcG proteins are not required to initiate repression, but to maintain it during later stages of development. They probably act via the methylation of histones, rendering chromatin heritably changed in its expressibility. The protein is Polycomb group protein EMBRYONIC FLOWER 2 (EMF2) of Arabidopsis thaliana (Mouse-ear cress).